A 620-amino-acid chain; its full sequence is Chaperone protein DnaK (620 aa).

The residue at position 197 (Thr-197) is a Phosphothreonine; by autocatalysis. The tract at residues 597–620 (AMANKNNAEQPKKKDDDVIDAEVE) is disordered.

It belongs to the heat shock protein 70 family.

In terms of biological role, acts as a chaperone. This is Chaperone protein DnaK from Helicobacter acinonychis (strain Sheeba).